A 399-amino-acid polypeptide reads, in one-letter code: MKRFQWVLLLAVLIIAGRAEIVQAAGNAEQTEDHAETAEQLAERTAASLETDKIGEFWNDIMTEYGGLLPESQKGSLMEFINGDKSFSPQEWLKALFSYLFHEVLANGKLLGTLILLTIFCVILQLLQNAFQQSTVSKVAYSIVYMVLIILALNSFHVAINYATEAIQTMTSFILALIPLLLALLASSGGAVSAAFFHPVILFLMNTSGLLIQNIVMPLIFLSAILSIVSTMTEQYKVTQLANLLRNIAIGALAVFLTIFLGVISVQGASAAVTDGITLRTAKFITGNFIPVLGRMFTDATDTVISASLLLKNTVGILGVAILICIAAFPAIKVLSLAFIYKLAAAILQPLGGGPVITCLDVISKSVIYIFAALAIVSLMFFLSLTVIITAGNLTMMMK.

The N-terminal stretch at 1–24 is a signal peptide; that stretch reads MKRFQWVLLLAVLIIAGRAEIVQA. Transmembrane regions (helical) follow at residues 104–124, 140–160, 172–192, 209–229, 248–268, 315–335, and 368–388; these read VLAN…CVIL, AYSI…HVAI, SFIL…GGAV, GLLI…LSIV, IAIG…SVQG, VGIL…IKVL, and IYIF…LTVI.

As to quaternary structure, interacts with SpoIIIJ and YqjG.

The protein localises to the cell membrane. Its function is as follows. Required during sporulation for activation of sigma factor SpoIIIG/SigG after engulfment is completed in the prespore. Overexpression in the absence of SpoIIIJ is synthetically lethal. This chain is Stage III sporulation protein AE (spoIIIAE), found in Bacillus subtilis (strain 168).